We begin with the raw amino-acid sequence, 277 residues long: S-formylglutathione hydrolase FrmB (277 aa).

Active-site charge relay system residues include S145, D221, and H254.

Belongs to the esterase D family.

The enzyme catalyses S-formylglutathione + H2O = formate + glutathione + H(+). Functionally, serine hydrolase involved in the detoxification of formaldehyde. Hydrolyzes S-formylglutathione to glutathione and formate. This Escherichia coli O6:H1 (strain CFT073 / ATCC 700928 / UPEC) protein is S-formylglutathione hydrolase FrmB (frmB).